Reading from the N-terminus, the 335-residue chain is Beta-hexosaminidase (335 aa).

Substrate-binding positions include aspartate 60, arginine 68, arginine 133, and 163–164 (KH). The Proton donor/acceptor role is filled by histidine 176. Catalysis depends on aspartate 247, which acts as the Nucleophile.

It belongs to the glycosyl hydrolase 3 family. NagZ subfamily.

The protein resides in the cytoplasm. It carries out the reaction Hydrolysis of terminal non-reducing N-acetyl-D-hexosamine residues in N-acetyl-beta-D-hexosaminides.. It functions in the pathway cell wall biogenesis; peptidoglycan recycling. Its function is as follows. Plays a role in peptidoglycan recycling by cleaving the terminal beta-1,4-linked N-acetylglucosamine (GlcNAc) from peptide-linked peptidoglycan fragments, giving rise to free GlcNAc, anhydro-N-acetylmuramic acid and anhydro-N-acetylmuramic acid-linked peptides. The chain is Beta-hexosaminidase from Stenotrophomonas maltophilia (strain R551-3).